Here is a 158-residue protein sequence, read N- to C-terminus: Protein BTG2 (158 aa).

Residue S147 is modified to Phosphoserine; by MAPK1 and MAPK3. At S149 the chain carries Phosphoserine; by MAPK14.

Belongs to the BTG family. Interacts with PRKCABP. Interacts with CNOT7 and CNOT8; indicative for an association with the CCR4-NOT complex. Interacts with PIN1, inducing mitochondrial depolarization. In terms of processing, phosphorylated at Ser-147 by MAPK1/ERK2 and MAPK3/ERK1, and at Ser-149 by MAPK14, leading to PIN1-binding and mitochondrial depolarization.

In terms of biological role, anti-proliferative protein; the function is mediated by association with deadenylase subunits of the CCR4-NOT complex. Activates mRNA deadenylation in a CNOT6 and CNOT7-dependent manner. In vitro can inhibit deadenylase activity of CNOT7 and CNOT8. Involved in cell cycle regulation. Could be involved in the growth arrest and differentiation of the neuronal precursors. Modulates transcription regulation mediated by ESR1. Involved in mitochondrial depolarization and neurite outgrowth. This Homo sapiens (Human) protein is Protein BTG2 (BTG2).